A 265-amino-acid chain; its full sequence is 5'-nucleotidase SurE (265 aa).

A divalent metal cation is bound by residues D8, D9, S39, and N96.

This sequence belongs to the SurE nucleotidase family. A divalent metal cation serves as cofactor.

It is found in the cytoplasm. The catalysed reaction is a ribonucleoside 5'-phosphate + H2O = a ribonucleoside + phosphate. In terms of biological role, nucleotidase that shows phosphatase activity on nucleoside 5'-monophosphates. In Dehalococcoides mccartyi (strain CBDB1), this protein is 5'-nucleotidase SurE.